The primary structure comprises 83 residues: DNA-directed RNA polymerase subunit Rpo5 (83 aa).

The protein belongs to the archaeal Rpo5/eukaryotic RPB5 RNA polymerase subunit family. As to quaternary structure, part of the RNA polymerase complex.

It is found in the cytoplasm. It catalyses the reaction RNA(n) + a ribonucleoside 5'-triphosphate = RNA(n+1) + diphosphate. In terms of biological role, DNA-dependent RNA polymerase (RNAP) catalyzes the transcription of DNA into RNA using the four ribonucleoside triphosphates as substrates. In Nitrosopumilus maritimus (strain SCM1), this protein is DNA-directed RNA polymerase subunit Rpo5.